We begin with the raw amino-acid sequence, 270 residues long: 4-hydroxy-tetrahydrodipicolinate reductase (270 aa).

Residues Gly11–Met16 and Glu37 contribute to the NAD(+) site. Position 38 (Arg38) interacts with NADP(+). NAD(+) is bound by residues Gly101–Thr103 and Ala125–Met128. Residue His158 is the Proton donor/acceptor of the active site. His159 is a (S)-2,3,4,5-tetrahydrodipicolinate binding site. The active-site Proton donor is the Lys162. Gly168–Thr169 provides a ligand contact to (S)-2,3,4,5-tetrahydrodipicolinate.

The protein belongs to the DapB family.

The protein resides in the cytoplasm. The enzyme catalyses (S)-2,3,4,5-tetrahydrodipicolinate + NAD(+) + H2O = (2S,4S)-4-hydroxy-2,3,4,5-tetrahydrodipicolinate + NADH + H(+). It catalyses the reaction (S)-2,3,4,5-tetrahydrodipicolinate + NADP(+) + H2O = (2S,4S)-4-hydroxy-2,3,4,5-tetrahydrodipicolinate + NADPH + H(+). It functions in the pathway amino-acid biosynthesis; L-lysine biosynthesis via DAP pathway; (S)-tetrahydrodipicolinate from L-aspartate: step 4/4. In terms of biological role, catalyzes the conversion of 4-hydroxy-tetrahydrodipicolinate (HTPA) to tetrahydrodipicolinate. The chain is 4-hydroxy-tetrahydrodipicolinate reductase from Shewanella putrefaciens (strain CN-32 / ATCC BAA-453).